A 419-amino-acid polypeptide reads, in one-letter code: N-acylglucosamine 2-epimerase (419 aa).

The leucine-zipper stretch occupies residues 185–206 (LLSLVEQLGEEDEELTNMYAEL). Ser-418 carries the post-translational modification Phosphoserine.

The protein belongs to the N-acylglucosamine 2-epimerase family. Homodimer. Forms a heterodimer with renin and inhibits its activity.

The catalysed reaction is an N-acyl-D-glucosamine = an N-acyl-D-mannosamine. Its pathway is amino-sugar metabolism; N-acetylneuraminate degradation. In terms of biological role, catalyzes the interconversion of N-acetylglucosamine to N-acetylmannosamine. Involved in the N-glycolylneuraminic acid (Neu5Gc) degradation pathway. In Mus musculus (Mouse), this protein is N-acylglucosamine 2-epimerase (Renbp).